A 178-amino-acid chain; its full sequence is ATP synthase subunit delta (178 aa).

The protein belongs to the ATPase delta chain family. F-type ATPases have 2 components, F(1) - the catalytic core - and F(0) - the membrane proton channel. F(1) has five subunits: alpha(3), beta(3), gamma(1), delta(1), epsilon(1). F(0) has three main subunits: a(1), b(2) and c(10-14). The alpha and beta chains form an alternating ring which encloses part of the gamma chain. F(1) is attached to F(0) by a central stalk formed by the gamma and epsilon chains, while a peripheral stalk is formed by the delta and b chains.

The protein localises to the cell inner membrane. Its function is as follows. F(1)F(0) ATP synthase produces ATP from ADP in the presence of a proton or sodium gradient. F-type ATPases consist of two structural domains, F(1) containing the extramembraneous catalytic core and F(0) containing the membrane proton channel, linked together by a central stalk and a peripheral stalk. During catalysis, ATP synthesis in the catalytic domain of F(1) is coupled via a rotary mechanism of the central stalk subunits to proton translocation. This protein is part of the stalk that links CF(0) to CF(1). It either transmits conformational changes from CF(0) to CF(1) or is implicated in proton conduction. The polypeptide is ATP synthase subunit delta (Acinetobacter baylyi (strain ATCC 33305 / BD413 / ADP1)).